A 565-amino-acid chain; its full sequence is Deformed epidermal autoregulatory factor 1 homolog (565 aa).

Disordered stretches follow at residues 34–62 (GGEA…ETPR) and 162–190 (GLKG…KGGT). Residues 169 to 181 (PLTPGPQSPPTPL) show a composition bias toward pro residues. A Phosphothreonine modification is found at Thr171. A Phosphoserine modification is found at Ser176. Thr179 is subject to Phosphothreonine. Residues 193–273 (NWDPSVYDSE…QCLIQDGILN (81 aa)) enclose the SAND domain. The short motif at 301–316 (KRRKKENELPTTPVKK) is the Nuclear localization signal element. The interval 403–478 (IAPFPEAALP…QLKTLFEQAK (76 aa)) is interaction with LMO4. At Thr432 the chain carries Phosphothreonine. At Ser448 the chain carries Phosphoserine. Positions 504, 507, 515, 518, 524, 528, 536, and 540 each coordinate Zn(2+). The MYND-type zinc-finger motif lies at 504–540 (CVNCGREAMNECTGCHKVNYCSTFCQRKDWKDHQHIC).

Homodimer. Interacts with LMO4; LMO4 blocks export from nucleus. Interacts with LMO2 and CLIM2. May interact with the corepressors NCOR1 and NCRO2. Identified in a complex with XRCC5 and XRCC6. Interacts (via the SAND domain) with the DNA-PK complex subunit XRCC6; the interaction is direct and may be inhibited by DNA-binding. Post-translationally, may be phosphorylated by DNA-PK complex in a DNA independent manner (in vitro).

It is found in the nucleus. Its function is as follows. Transcription factor that binds to sequence with multiple copies of 5'-TTC[CG]G-3' present in its own promoter and that of the HNRPA2B1 gene. Down-regulates transcription of these genes. Binds to the retinoic acid response element (RARE) 5'-AGGGTTCACCGAAAGTTCA-3'. Activates the proenkephalin gene independently of promoter binding, probably through protein-protein interaction. Regulates epithelial cell proliferation and side-branching in the mammary gland. Required for neural tube closure and skeletal patterning. Controls the expression of peripheral tissue antigens in pancreatic lymph nodes. Transcriptional activator of EIF4G3. May also involved in behavior. This is Deformed epidermal autoregulatory factor 1 homolog (DEAF1) from Pan troglodytes (Chimpanzee).